A 180-amino-acid chain; its full sequence is ATP synthase subunit delta (180 aa).

This sequence belongs to the ATPase delta chain family. As to quaternary structure, F-type ATPases have 2 components, F(1) - the catalytic core - and F(0) - the membrane proton channel. F(1) has five subunits: alpha(3), beta(3), gamma(1), delta(1), epsilon(1). F(0) has three main subunits: a(1), b(2) and c(10-14). The alpha and beta chains form an alternating ring which encloses part of the gamma chain. F(1) is attached to F(0) by a central stalk formed by the gamma and epsilon chains, while a peripheral stalk is formed by the delta and b chains.

It is found in the cell membrane. Its function is as follows. F(1)F(0) ATP synthase produces ATP from ADP in the presence of a proton or sodium gradient. F-type ATPases consist of two structural domains, F(1) containing the extramembraneous catalytic core and F(0) containing the membrane proton channel, linked together by a central stalk and a peripheral stalk. During catalysis, ATP synthesis in the catalytic domain of F(1) is coupled via a rotary mechanism of the central stalk subunits to proton translocation. This protein is part of the stalk that links CF(0) to CF(1). It either transmits conformational changes from CF(0) to CF(1) or is implicated in proton conduction. The protein is ATP synthase subunit delta of Lactobacillus delbrueckii subsp. bulgaricus (strain ATCC 11842 / DSM 20081 / BCRC 10696 / JCM 1002 / NBRC 13953 / NCIMB 11778 / NCTC 12712 / WDCM 00102 / Lb 14).